Consider the following 101-residue polypeptide: Glutenin, high molecular weight subunit PC256 (101 aa).

The span at glutamate 1–proline 27 shows a compositional bias: polar residues. The interval glutamate 1–serine 65 is disordered. The segment covering glutamine 41–tyrosine 62 has biased composition (low complexity).

Belongs to the gliadin/glutenin family. Disulfide-bridge linked aggregates.

Its function is as follows. Glutenins are high-molecular weight seed storage proteins of wheat endosperm. Thought to be responsible for the visco-elastic property of wheat dough. In Triticum aestivum (Wheat), this protein is Glutenin, high molecular weight subunit PC256.